We begin with the raw amino-acid sequence, 277 residues long: Large ribosomal subunit protein uL2 (277 aa).

3 disordered regions span residues 1 to 20, 27 to 55, and 207 to 277; these read MGIR…SVSD, TQPE…RHRG, and KAGR…RNQS. Residues 27–48 are compositionally biased toward polar residues; sequence TQPEKSLTTYKHSSQGRNNRGV. 2 stretches are compositionally biased toward basic residues: residues 207–220 and 259–277; these read KAGR…RPHV and TRNR…RNQS.

It belongs to the universal ribosomal protein uL2 family. As to quaternary structure, part of the 50S ribosomal subunit. Forms a bridge to the 30S subunit in the 70S ribosome.

One of the primary rRNA binding proteins. Required for association of the 30S and 50S subunits to form the 70S ribosome, for tRNA binding and peptide bond formation. It has been suggested to have peptidyltransferase activity; this is somewhat controversial. Makes several contacts with the 16S rRNA in the 70S ribosome. The protein is Large ribosomal subunit protein uL2 of Gloeothece citriformis (strain PCC 7424) (Cyanothece sp. (strain PCC 7424)).